We begin with the raw amino-acid sequence, 218 residues long: Eukaryotic translation initiation factor 4E-1 (218 aa).

The disordered stretch occupies residues 1-39 (MAEETDTRPASAGSRGRPAPEDDDREEGEITDLACAPSP). Acidic residues predominate over residues 21–30 (EDDDREEGEI). 2 EIF4G-binding regions span residues 43–46 (HPLE) and 53–89 (FDNP…NNIN). Residues 61–66 (KQAAWG), lysine 93, and 111–112 (WE) each bind mRNA. Cysteine 116 and cysteine 154 are disulfide-bonded. Residues 137 to 146 (HTLLAMIGEQ) are EIF4G-binding. MRNA is bound by residues 161 to 166 (RGKQER) and 206 to 210 (KKMDK).

The protein belongs to the eukaryotic initiation factor 4E family. As to quaternary structure, EIF4F is a multi-subunit complex, the composition of which varies with external and internal environmental conditions. It is composed of at least EIF4A, EIF4E and EIF4G. EIF4E is also known to interact with other partners. In higher plants two isoforms of EIF4F have been identified, named isoform EIF4F and isoform EIF(iso)4F. Isoform EIF4F has subunits p220 and p26, whereas isoform EIF(iso)4F has subunits p82 and p28. Post-translationally, according to the redox status, the Cys-116-Cys-154 disulfide bridge may have a role in regulating protein function by affecting its ability to bind capped mRNA. Phosphorylated upon oxygen deprivation.

Its subcellular location is the nucleus. The protein resides in the cytoplasm. Functionally, component of the protein complex eIF4F, which is involved in the recognition of the mRNA cap, ATP-dependent unwinding of 5'-terminal secondary structure and recruitment of mRNA to the ribosome. Recognizes and binds the 7-methylguanosine-containing mRNA cap during an early step in the initiation of protein synthesis and facilitates ribosome binding by inducing the unwinding of the mRNAs secondary structures. This Zea mays (Maize) protein is Eukaryotic translation initiation factor 4E-1.